The following is a 647-amino-acid chain: tRNA 5-methylaminomethyl-2-thiouridine biosynthesis bifunctional protein MnmC (647 aa).

The tract at residues 1-227 (MLTWKNNLTP…KREMLIGSYS (227 aa)) is tRNA (mnm(5)s(2)U34)-methyltransferase. The interval 256–647 (VGAGIAGTTL…ARFLYRKVRK (392 aa)) is FAD-dependent cmnm(5)s(2)U34 oxidoreductase.

The protein in the N-terminal section; belongs to the methyltransferase superfamily. tRNA (mnm(5)s(2)U34)-methyltransferase family. In the C-terminal section; belongs to the DAO family. It depends on FAD as a cofactor.

The protein resides in the cytoplasm. It carries out the reaction 5-aminomethyl-2-thiouridine(34) in tRNA + S-adenosyl-L-methionine = 5-methylaminomethyl-2-thiouridine(34) in tRNA + S-adenosyl-L-homocysteine + H(+). Its function is as follows. Catalyzes the last two steps in the biosynthesis of 5-methylaminomethyl-2-thiouridine (mnm(5)s(2)U) at the wobble position (U34) in tRNA. Catalyzes the FAD-dependent demodification of cmnm(5)s(2)U34 to nm(5)s(2)U34, followed by the transfer of a methyl group from S-adenosyl-L-methionine to nm(5)s(2)U34, to form mnm(5)s(2)U34. The protein is tRNA 5-methylaminomethyl-2-thiouridine biosynthesis bifunctional protein MnmC of Leptospira interrogans serogroup Icterohaemorrhagiae serovar Lai (strain 56601).